The following is a 191-amino-acid chain: Glutathione-dependent formaldehyde-activating enzyme (191 aa).

The CENP-V/GFA domain occupies 22-169 (FAGGTLQCLC…LTELGLTPYD (148 aa)). Residues Cys29, Cys31, Cys50, Cys52, Cys55, Cys97, and Cys100 each contribute to the Zn(2+) site.

The protein belongs to the Gfa family. Zn(2+) is required as a cofactor.

The catalysed reaction is S-(hydroxymethyl)glutathione = glutathione + formaldehyde. It participates in one-carbon metabolism; formaldehyde degradation; formate from formaldehyde (glutathione route): step 1/3. Catalyzes the condensation of formaldehyde and glutathione to S-hydroxymethylglutathione. This Xanthomonas campestris pv. campestris (strain B100) protein is Glutathione-dependent formaldehyde-activating enzyme.